A 429-amino-acid polypeptide reads, in one-letter code: Saccharopine dehydrogenase-like oxidoreductase (429 aa).

Residue Ala-2 is modified to N-acetylalanine. Phosphoserine is present on residues Ser-209, Ser-215, and Ser-217.

It belongs to the saccharopine dehydrogenase family.

In Rattus norvegicus (Rat), this protein is Saccharopine dehydrogenase-like oxidoreductase (Sccpdh).